Reading from the N-terminus, the 207-residue chain is Phosphoribosylglycinamide formyltransferase (207 aa).

13-15 (GSN) is a binding site for N(1)-(5-phospho-beta-D-ribosyl)glycinamide. (6R)-10-formyltetrahydrofolate contacts are provided by residues 100 to 103 (MHIL) and N120. H122 (proton donor) is an active-site residue. D162 lines the (6R)-10-formyltetrahydrofolate pocket. E191 is a binding site for N(1)-(5-phospho-beta-D-ribosyl)glycinamide.

The protein belongs to the GART family.

The enzyme catalyses N(1)-(5-phospho-beta-D-ribosyl)glycinamide + (6R)-10-formyltetrahydrofolate = N(2)-formyl-N(1)-(5-phospho-beta-D-ribosyl)glycinamide + (6S)-5,6,7,8-tetrahydrofolate + H(+). Its pathway is purine metabolism; IMP biosynthesis via de novo pathway; N(2)-formyl-N(1)-(5-phospho-D-ribosyl)glycinamide from N(1)-(5-phospho-D-ribosyl)glycinamide (10-formyl THF route): step 1/1. The sequence is that of Phosphoribosylglycinamide formyltransferase (ade5) from Schizosaccharomyces pombe (strain 972 / ATCC 24843) (Fission yeast).